Consider the following 576-residue polypeptide: MSEEAAYQEDTAVQNTPADALSPVESDSNSALSTPSNKAERDDMKDFDENHEESNNYVEIPKKPASAYVTVSICCLMVAFGGFVFGWDTGTISGFVAQTDFIRRFGMKHHDGTYYLSKVRTGLIVSIFNIGCAIGGIILARLGDMYGRKMGLIVVVVIYIIGIIIQIASINKWYQYFIGRIISGLGVGGIAVLSPMLISEVSPKHIRGTLVSCYQLMITLGIFLGYCTNYGTKTYTNSVQWRVPLGLGFAWALFMIGGMTFVPESPRYLVEVGKIEEAKRSIALSNKVSADDPAVMAEVEVVQATVEAEKLAGNASWGEIFSTKTKVFQRLIMGAMIQSLQQLTGDNYFFYYGTTVFTAVGLEDSFETSIVLGIVNFASTFVGIFLVERYGRRRCLLWGAASMTACMVVFASVGVTRLWPNGKKNGSSKGAGNCMIVFTCFYLFCFATTWAPIPFVVNSETFPLRVKSKCMAIAQACNWIWGFLIGFFTPFISGAIDFYYGYVFMGCLVFSYFYVFFFVPETKGLTLEEVNTLWEEGVLPWKSPSWVPPNKRGTDYNADDLMHDDQPFYKKMFGKK.

The segment at 1 to 56 (MSEEAAYQEDTAVQNTPADALSPVESDSNSALSTPSNKAERDDMKDFDENHEESNN) is disordered. The Cytoplasmic portion of the chain corresponds to 1–66 (MSEEAAYQED…YVEIPKKPAS (66 aa)). A compositionally biased stretch (polar residues) spans 25–37 (ESDSNSALSTPSN). Positions 38–54 (KAERDDMKDFDENHEES) are enriched in basic and acidic residues. Lys45 participates in a covalent cross-link: Glycyl lysine isopeptide (Lys-Gly) (interchain with G-Cter in ubiquitin). Residues 67 to 87 (AYVTVSICCLMVAFGGFVFGW) traverse the membrane as a helical segment. At 88–122 (DTGTISGFVAQTDFIRRFGMKHHDGTYYLSKVRTG) the chain is on the extracellular side. Residues 123–143 (LIVSIFNIGCAIGGIILARLG) traverse the membrane as a helical segment. The Cytoplasmic portion of the chain corresponds to 144 to 149 (DMYGRK). A helical membrane pass occupies residues 150–170 (MGLIVVVVIYIIGIIIQIASI). The Extracellular portion of the chain corresponds to 171 to 180 (NKWYQYFIGR). A helical transmembrane segment spans residues 181–201 (IISGLGVGGIAVLSPMLISEV). Topologically, residues 202 to 207 (SPKHIR) are cytoplasmic. The helical transmembrane segment at 208–228 (GTLVSCYQLMITLGIFLGYCT) threads the bilayer. Residues 229 to 242 (NYGTKTYTNSVQWR) are Extracellular-facing. A helical membrane pass occupies residues 243-263 (VPLGLGFAWALFMIGGMTFVP). Residues 264 to 346 (ESPRYLVEVG…IQSLQQLTGD (83 aa)) are Cytoplasmic-facing. Residues 347–363 (NYFFYYGTTVFTAVGLE) form a helical membrane-spanning segment. Residues 364-369 (DSFETS) lie on the Extracellular side of the membrane. Residues 370-387 (IVLGIVNFASTFVGIFLV) traverse the membrane as a helical segment. Over 388–394 (ERYGRRR) the chain is Cytoplasmic. The helical transmembrane segment at 395-415 (CLLWGAASMTACMVVFASVGV) threads the bilayer. Over 416-437 (TRLWPNGKKNGSSKGAGNCMIV) the chain is Extracellular. N-linked (GlcNAc...) asparagine glycosylation is present at Asn425. A helical membrane pass occupies residues 438–458 (FTCFYLFCFATTWAPIPFVVN). Over 459-475 (SETFPLRVKSKCMAIAQ) the chain is Cytoplasmic. Residues 476-496 (ACNWIWGFLIGFFTPFISGAI) traverse the membrane as a helical segment. Asp497 is a topological domain (extracellular). A helical transmembrane segment spans residues 498 to 518 (FYYGYVFMGCLVFSYFYVFFF). The Cytoplasmic portion of the chain corresponds to 519-576 (VPETKGLTLEEVNTLWEEGVLPWKSPSWVPPNKRGTDYNADDLMHDDQPFYKKMFGKK).

The protein belongs to the major facilitator superfamily. Sugar transporter (TC 2.A.1.1) family.

It is found in the cell membrane. With respect to regulation, xylose uptake is strongly inhibited by glucose. Low-affinity glucose transporter. Can also transport xylose. The protein is Low-affinity glucose transporter HXT4 (HXT4) of Saccharomyces cerevisiae (strain YJM789) (Baker's yeast).